A 475-amino-acid chain; its full sequence is Aspartyl/glutamyl-tRNA(Asn/Gln) amidotransferase subunit B (475 aa).

The protein belongs to the GatB/GatE family. GatB subfamily. As to quaternary structure, heterotrimer of A, B and C subunits.

It carries out the reaction L-glutamyl-tRNA(Gln) + L-glutamine + ATP + H2O = L-glutaminyl-tRNA(Gln) + L-glutamate + ADP + phosphate + H(+). It catalyses the reaction L-aspartyl-tRNA(Asn) + L-glutamine + ATP + H2O = L-asparaginyl-tRNA(Asn) + L-glutamate + ADP + phosphate + 2 H(+). Functionally, allows the formation of correctly charged Asn-tRNA(Asn) or Gln-tRNA(Gln) through the transamidation of misacylated Asp-tRNA(Asn) or Glu-tRNA(Gln) in organisms which lack either or both of asparaginyl-tRNA or glutaminyl-tRNA synthetases. The reaction takes place in the presence of glutamine and ATP through an activated phospho-Asp-tRNA(Asn) or phospho-Glu-tRNA(Gln). This Macrococcus caseolyticus (strain JCSC5402) (Macrococcoides caseolyticum) protein is Aspartyl/glutamyl-tRNA(Asn/Gln) amidotransferase subunit B.